An 813-amino-acid chain; its full sequence is MAEPRTASPRRLPALRRPGFLPPLLPPPPPPLLLLLLLLPLPAPSLGLGHSAELAFSVEPNDDIANPGQPIVLGCKVEGTPPVQVSWRKNGAELPEGTHTTLLANGSLLIHHFRLEQGGSPSDEGDYECVAQNRFGLLVSRKARLQAATMSDFHVHPQAVTGEEGGVARFQCQIHGLPKPLITWEKNRVPIDTDDERYTLLPKGVLQITGLRAEDSGIFHCVASNIASVRVSHGARLTVSGSGSGTYKEPTILVGPENLTLTVHQTAVLECVATGNPRPIVSWSRLDGRPIGVEGIQVLGTGNLIISDVTVQHSGVYVCAANRPGTRVRRTAQGRLVVQAPAEFVQHPQSISRPAGTTAMFTCQAQGEPPPHVTWLKNGQVLGAGGHVRLKNNNSTLSISGVGPEDEAIYQCVAENIAGSSQASARLTVLWAEGLPGPPRNVRAVSVSSTEVRVSWSEPLAHTKEIIGYVLHIRKAADSPKLEYQEAVSKSTFQHLVRDLEPSTAYSFYIKAYTPRGASLASVPTLASTLGEAPVPPPLSVRLLGSSSLQLLWKPWPRLAQHNGGFKLFYRPVSATSFTGPILLPGTVSSYNLSQLDPSTVYEVKLLAYNQHGDGNATVRFVSLKGASERTALTPPCDCRKEDVTNHTSTTGIVIGIHIGVTCIIFCVLFLLFGQRGRVLLCKDVENQLSPPQGPRSQRDPGILALNGLSRGEGGQLSRDEKPVDAKELEQLFPTAGSAAQPGSTPTDPAAPAPCEETQLSMVQLQGFNLVAGRTTEATSPCAGPGPVPAPQDIGPVPLSEGQTQPPAVAAPQ.

The disordered stretch occupies residues 1 to 21 (MAEPRTASPRRLPALRRPGFL). The signal sequence occupies residues 1–47 (MAEPRTASPRRLPALRRPGFLPPLLPPPPPPLLLLLLLLPLPAPSLG). Residues 9–19 (PRRLPALRRPG) show a composition bias toward low complexity. Ig-like C2-type domains lie at 49-151 (GHSA…ATMS), 151-232 (SDFH…VRVS), 250-333 (PTIL…RTAQ), and 341-428 (PAEF…ARLT). Intrachain disulfides connect cysteine 75–cysteine 129 and cysteine 172–cysteine 221. A glycan (N-linked (GlcNAc...) asparagine) is linked at asparagine 105. N-linked (GlcNAc...) asparagine glycosylation is present at asparagine 258. 2 disulfides stabilise this stretch: cysteine 271-cysteine 319 and cysteine 363-cysteine 412. 2 N-linked (GlcNAc...) asparagine glycosylation sites follow: asparagine 393 and asparagine 394. 2 consecutive Fibronectin type-III domains span residues 438–532 (PPRN…TLGE) and 535–630 (VPPP…ASER). Residues asparagine 592, asparagine 616, and asparagine 646 are each glycosylated (N-linked (GlcNAc...) asparagine). A helical transmembrane segment spans residues 653–673 (IVIGIHIGVTCIIFCVLFLLF). 2 disordered regions span residues 689–724 (LSPPQGPRSQRDPGILALNGLSRGEGGQLSRDEKPV) and 775–813 (TTEATSPCAGPGPVPAPQDIGPVPLSEGQTQPPAVAAPQ).

This sequence belongs to the immunoglobulin superfamily. DCC family. Detected in cerebellum, kidney, heart, lung, skeletal muscle and spleen.

The protein localises to the membrane. The polypeptide is Immunoglobulin superfamily DCC subclass member 3 (Igdcc3) (Mus musculus (Mouse)).